Here is a 356-residue protein sequence, read N- to C-terminus: Protein MGF 360-3L (356 aa).

The stretch at 61–93 (KLNTALVLAVKENNEDLIMLFTEWGANINYGLL) is one ANK repeat.

It belongs to the asfivirus MGF 360 family.

Functionally, plays a role in virus cell tropism, and may be required for efficient virus replication in macrophages. This chain is Protein MGF 360-3L, found in African swine fever virus (strain Badajoz 1971 Vero-adapted) (Ba71V).